We begin with the raw amino-acid sequence, 470 residues long: Cholesterol 7-desaturase nvd 1 (470 aa).

The chain crosses the membrane as a helical span at residues Leu-67–Val-87. Residues Phe-136 to Val-238 enclose the Rieske domain. [2Fe-2S] cluster is bound by residues Cys-176, His-178, Cys-196, and His-199.

This sequence belongs to the cholesterol 7-desaturase family. The cofactor is [2Fe-2S] cluster.

The protein localises to the membrane. It catalyses the reaction cholesterol + NADPH + O2 + H(+) = 7-dehydrocholesterol + NADP(+) + 2 H2O. The enzyme catalyses cholesterol + NADH + O2 + H(+) = 7-dehydrocholesterol + NAD(+) + 2 H2O. It participates in steroid hormone biosynthesis; dafachronic acid biosynthesis. Catalyzes the production of 7-dehydrocholesterol (7-DHC or cholesta-5,7-dien-3beta-ol) by inserting a double bond (desaturating) at the C7-C8 single bond of cholesterol. Essential regulator of steroid biosynthesis as this reaction is the first step in the synthesis of the steroid hormone Delta(7)-dafachronic acid. The sequence is that of Cholesterol 7-desaturase nvd 1 from Ciona intestinalis (Transparent sea squirt).